Reading from the N-terminus, the 564-residue chain is MFSRNHRSRITVARGSALEMEFKRGRFRLSFFSESPEDTELQRKLDHEIRMRDGACKLLAACSQREQALEATKSLLVCNSRILSYMGELQRRKEAQVLEKTGRRPSDSVQPAQHSPCRGRVCISDLRIPLMWKDTEYFKNKGDLHRWAVFLLLQIGEQIQDTEMVLVDRTLTDISFQNNVLFAEAEPDFELRLELYGACVEEEGALAGAPKRLATKLSSSLGRSSGKRVRASLDSAGASGNSPVLLPTPAVGGPRFHLLAHTTLTLEEVQDGFRTHDLTLTSHEENPAWLPLYGSVCCRLAAQPLCMIQPTASGALRVQQAGELQNGTLVHGVLKGTNLFCYWRSEDADTGQEPLFTIVINKETRVRAGELEQAPEWPFTLSISNKYGDDEVTNTLQLESREALQNWMEALWQLFFDMSQWRHCCDEVMKIETPAPRKPPQALAKQGSLYHEMAIEPLDDIAAVTDILAQREGTRLEPSPPWLAMFTDQPALPSSCSPASVAPVPTWMQPLPWGRPRTFSLDAAPADHSLGPSRSVAPLPPQRSPKSRGFYSKSQLGPWLQSPV.

The residue at position 14 (R14) is an Omega-N-methylarginine. Positions 17–98 (ALEMEFKRGR…LQRRKEAQVL (82 aa)) constitute an REM-1 domain. Phosphoserine is present on residues S30 and S106. R230 carries the post-translational modification Asymmetric dimethylarginine. The residue at position 232 (S232) is a Phosphoserine. The PH domain occupies 309 to 416 (QPTASGALRV…WMEALWQLFF (108 aa)). The disordered stretch occupies residues 518 to 564 (TFSLDAAPADHSLGPSRSVAPLPPQRSPKSRGFYSKSQLGPWLQSPV). S520, S529, and S544 each carry phosphoserine.

In terms of assembly, interacts via its C-terminal region with the TAX1BP3 PDZ domain. This interaction facilitates Rho-mediated activation of the c-Fos serum response element (SRE). Interacts with SEPT9. Specifically binds to GTP-bound RHOA, RHOB and RHOC and inhibits their GTPase activity. As to expression, abundantly expressed in brain and kidney. Weakly expressed in lung, testis, skeletal muscle, heart and thymus.

In terms of biological role, mediates Rho signaling to activate NF-kappa-B and may confer increased resistance to apoptosis to cells in gastric tumorigenesis. May play a novel role in the organization of septin structures. In Mus musculus (Mouse), this protein is Rhotekin.